Consider the following 301-residue polypeptide: UDP-N-acetylenolpyruvoylglucosamine reductase (301 aa).

Positions 30–194 (VGGEADYLVF…LSVKFALAPG (165 aa)) constitute an FAD-binding PCMH-type domain. Arg173 is a catalytic residue. Ser223 (proton donor) is an active-site residue. Glu293 is a catalytic residue.

The protein belongs to the MurB family. FAD is required as a cofactor.

The protein resides in the cytoplasm. It catalyses the reaction UDP-N-acetyl-alpha-D-muramate + NADP(+) = UDP-N-acetyl-3-O-(1-carboxyvinyl)-alpha-D-glucosamine + NADPH + H(+). It participates in cell wall biogenesis; peptidoglycan biosynthesis. Its function is as follows. Cell wall formation. This Streptococcus pneumoniae (strain 70585) protein is UDP-N-acetylenolpyruvoylglucosamine reductase.